A 115-amino-acid chain; its full sequence is UPF0342 protein Bsph_0375 (115 aa).

Belongs to the UPF0342 family.

The polypeptide is UPF0342 protein Bsph_0375 (Lysinibacillus sphaericus (strain C3-41)).